A 376-amino-acid chain; its full sequence is Erythronate-4-phosphate dehydrogenase (376 aa).

Residues Ser-45 and Thr-67 each coordinate substrate. Asp-147 is a binding site for NAD(+). The active site involves Arg-209. Asp-233 contacts NAD(+). The active site involves Glu-238. His-255 acts as the Proton donor in catalysis. Gly-258 serves as a coordination point for NAD(+). Residue Tyr-259 participates in substrate binding.

The protein belongs to the D-isomer specific 2-hydroxyacid dehydrogenase family. PdxB subfamily. In terms of assembly, homodimer.

Its subcellular location is the cytoplasm. It catalyses the reaction 4-phospho-D-erythronate + NAD(+) = (R)-3-hydroxy-2-oxo-4-phosphooxybutanoate + NADH + H(+). It participates in cofactor biosynthesis; pyridoxine 5'-phosphate biosynthesis; pyridoxine 5'-phosphate from D-erythrose 4-phosphate: step 2/5. Catalyzes the oxidation of erythronate-4-phosphate to 3-hydroxy-2-oxo-4-phosphonooxybutanoate. In Shewanella sp. (strain MR-7), this protein is Erythronate-4-phosphate dehydrogenase.